A 993-amino-acid chain; its full sequence is MALAGKQYEGSLNNSRPNLWPSSIPGGKNEIITSLVTALDSMCTALSKLNTEVACIALHEESAFVVGTEKGRCFLNSRKELQADFQRFCIGAHKKDQENEVKRRNRDGIQNIQHVPLGPTSDIYLLRKMVEEIFEVLYSEALGKSNIVPVPYVKVMKEPGSVVVLGLPDGISFRKPAEYDLKSLMLILKHSHNIRFKLRIPTEESIREPKSCSELNSPPTSATKVIPETSQCHRLPIQEHPSSASNFPYSVSQPNQISLEPKQEVHSNMLGTNAVNQMLVQRPSAENNHDLSDCCGQQSPVAGSSLRQNVLASKHLLFSIVHDKTDKWDSFLRETEDINILRECVQILFNSRYAGALGLDHMVPVPYRKIACHPEAVEINGFPDKIPFKRPCTYGVPKLKRILEERHNIHFTIKSMFDQRIFDGTTFTKETTKSDSSSLGEEACSENQKAAALDMLGFPTGSRSEKSSISDECEPGTSSETTGVKLIKLEAEDPDIMQIAVPGTSSETSGVKIIKLESEDPDLIQITVPGTSNETSGVKPKLESEDPDLIQIAVPDRLAECVKNHLAPEDPSYVLDTGKVCDDRPCGVLRNENKHLDGIGDIIRQLRKHVENLFNRKYAKAIGASGPVKVPYAKFLMYPEDLFVLGLPEGVAFRRPNCFGITKLRRILEYSDGIQFVVKRPELISEGLEDCVVGSPGTLGFNDKSNEVILDETNTRPSFQESFDARLSRIDIANTLREQVQVLFNKKYGEALGIKYPVQVPYKRIKNNPGSVIIEGLPPGIPFRKPCTFGSQNLERILAVADKIRFTVTRPFQGLIPRPDDEDANRLGEKVILREQVKELFNEKYGKALGLDQPALIPYKLIRDNPDAVEVRGMPNDIPFRNPNSYDLHRLENILKAQDQIQMVVIKQLEPFPEICSEPPKIKNGNTGPKRKRKRVSEGNSISSASSNCSSSSSSSSNMDPISSAHHVSLVQWPMYMLDYGGLNMQLPGPINY.

2 GTF2I-like repeats span residues 117–211 (LGPT…EPKS) and 332–426 (LRET…DGTT). The interval 461-480 (GSRSEKSSISDECEPGTSSE) is disordered. GTF2I-like repeat units follow at residues 597-691 (DGIG…LEDC), 727-821 (LSRI…RPDD), and 824-918 (ANRL…ICSE). The tract at residues 916 to 961 (CSEPPKIKNGNTGPKRKRKRVSEGNSISSASSNCSSSSSSSSNMDP) is disordered. Residues 929–936 (PKRKRKRV) carry the Nuclear localization signal motif. The segment covering 938 to 961 (EGNSISSASSNCSSSSSSSSNMDP) has biased composition (low complexity).

It belongs to the TFII-I family. In terms of assembly, interacts (via repeats 4-5) with foxh1/fast1 (via Fork-head domain). Interacts with smad2 and smad3 (via MH1 domain) in a ligand (activin)-dependent manner. Interacts with pou5f1.1/oct-25 to form a repression complex on the promoters of the gsc and mix2 genes. In terms of tissue distribution, uniformly expressed in the embryo in pre- and early gastrula stages. Enriched in the head region of early neurula through tailbud stages.

It localises to the nucleus. Transcription factor that activates a subset of organizer-specific genes. Binds to the distal element (DE) of the gsc promoter to regulate its expression. In the presence of pou5f1.1/oct-25, forms a repression complex on the promoter of the gsc and mix2 genes to inhibit their transcription. This chain is General transcription factor II-I repeat domain-containing protein 1 (gtf2ird1), found in Xenopus laevis (African clawed frog).